The chain runs to 865 residues: MIKAIIGKIIGTRNDRWIKQYKKQVLAINALEPAYEKMSDDELQNAFEELKKRVRSTEKDLQEKTLLEVLPESFAITREASKRILKMRHFDVQLIGGMVLNDGKIAEMKTGEGKTLVATLAVALNALKGESVYVVTVNDYLAHRDSKEMEPLYQFLGYSVGTITASVRDDDERLEIYSKDIVYGTNNEFGFDYLRDNMKYSLEHKVQKSHAFAIVDEVDSILIDEARTPLIISGPVDRRMENYNKADEVAKSMQVETDFTIDEKNRAILITEEGIKKAENLFGVDNLYKIENAALSHHLDQALKANYLFFIDKDYIVANNEVVIVDEFTGRLSEGRRFSEGLHQALEAKEGVSIKEESQTLADITFQNYFRMFSKLSGMTGTAQTEATEFLEIYNLEVVSIPTNLAIKRKDLNDLIYKSEKEKFDAVILKIKELHDKGQPVLVGTASIEKSETLHALLKKERIPHTVLNAKQHTKEAEIIKDAGLKGAVTIATNMAGRGVDIKLTDEIKELGGLYIIGTERHESRRIDNQLRGRSGRQGDPGTSQFYLSLEDNLLRIFGSDRIKGVMEKLGLKDGEHIESKLVTRAVENAQKKVENLHFESRKHLLEYDDVANEQRKSVYKFRDELLDVNYDISAKIAENREYALNQIFSKLKAFDHQNLSEEELLGLKNVLKEDFNAHVSLEDLKKATPIEKFVAEKLKSDYENKMKVLDSEQRSRIERIVYLQILDNAWREHLYTMDNLKTGINLRGYNQKDPLVEYKKESYNLFLEFIEDIKMEAIKTFSKIQFENEQDSSDAERYLDNFSEEREHESVTYRHEETLDEDLNVAMKAFSKTPKRNEPCPCQSGKKYKDCCAKSGPKKGLFAK.

Residues Gln-93, Gly-111 to Thr-115, and Asp-501 contribute to the ATP site. Zn(2+) contacts are provided by Cys-841, Cys-843, Cys-852, and Cys-853.

The protein belongs to the SecA family. As to quaternary structure, monomer and homodimer. Part of the essential Sec protein translocation apparatus which comprises SecA, SecYEG and auxiliary proteins SecDF-YajC and YidC. Requires Zn(2+) as cofactor.

It is found in the cell inner membrane. Its subcellular location is the cytoplasm. It catalyses the reaction ATP + H2O + cellular proteinSide 1 = ADP + phosphate + cellular proteinSide 2.. Part of the Sec protein translocase complex. Interacts with the SecYEG preprotein conducting channel. Has a central role in coupling the hydrolysis of ATP to the transfer of proteins into and across the cell membrane, serving as an ATP-driven molecular motor driving the stepwise translocation of polypeptide chains across the membrane. The protein is Protein translocase subunit SecA of Helicobacter pylori (strain G27).